Consider the following 1237-residue polypeptide: Cilia- and flagella-associated protein 61 (1237 aa).

The disordered stretch occupies residues 278 to 301; it reads QDLSVRRSQDAELRSSSQGSQKIV. Residues 281 to 290 are compositionally biased toward basic and acidic residues; it reads SVRRSQDAEL.

Component of axonemal radial spokes, the protein complexes that link the outer microtubule doublets with the central pair of microtubules. Interacts with CFAP91/MAATS1, ODAD2/ARMC4, RSPH3A, ROPN1, ROPN1L and RSPH9. Interacts with DYNLT1, DYNC1I2 and TUBB3. Interacts with WDR35, IFT22 and IFT81.

Its subcellular location is the cytoplasm. The protein resides in the cytoskeleton. The protein localises to the flagellum axoneme. Involved in sperm flagellum assembly. Plays an essential role in the formation of the radial spokes in flagellum axoneme. The polypeptide is Cilia- and flagella-associated protein 61 (Homo sapiens (Human)).